The sequence spans 156 residues: ATP synthase subunit b 1 (156 aa).

A helical transmembrane segment spans residues 5 to 27 (FTLISQAMAFAIFIWFTVRFVWP).

Belongs to the ATPase B chain family. As to quaternary structure, F-type ATPases have 2 components, F(1) - the catalytic core - and F(0) - the membrane proton channel. F(1) has five subunits: alpha(3), beta(3), gamma(1), delta(1), epsilon(1). F(0) has three main subunits: a(1), b(2) and c(10-14). The alpha and beta chains form an alternating ring which encloses part of the gamma chain. F(1) is attached to F(0) by a central stalk formed by the gamma and epsilon chains, while a peripheral stalk is formed by the delta and b chains.

It localises to the cell inner membrane. Functionally, f(1)F(0) ATP synthase produces ATP from ADP in the presence of a proton or sodium gradient. F-type ATPases consist of two structural domains, F(1) containing the extramembraneous catalytic core and F(0) containing the membrane proton channel, linked together by a central stalk and a peripheral stalk. During catalysis, ATP synthesis in the catalytic domain of F(1) is coupled via a rotary mechanism of the central stalk subunits to proton translocation. In terms of biological role, component of the F(0) channel, it forms part of the peripheral stalk, linking F(1) to F(0). This chain is ATP synthase subunit b 1, found in Nitrosospira multiformis (strain ATCC 25196 / NCIMB 11849 / C 71).